The sequence spans 603 residues: MAKHIVELTDALSNKIAAGEVVERPASVVKELVENAIDAGSTVIDILVEEAGLNKITIIDNGSGIEEEDVATAFLRHATSKIKNEADLFRVHTLGFRGEALPSIASVSHLEMETSTGEAKGTTISLEGGKIIEQKSGHARKGTQIEVSQLFFNTPARLKYLKSLPTELGNITDILNRLALAHPDISFRFSHNGKPLLQTNGNGDLRQVIAAIYGVSIAKKSVPVKAESLDFKISGYAVLPEVNRSNRNYISTIINGRFIKNFALVKAIQEGYHTLLPIGRFPIIVLQIEMDPIIVDVNVHPAKLEVRLSKEKELGQLISQMIKETFHKLQLIPDGEISKKQKEDQKSEQIQISFEEKKPVKETPTLFSKPTIPEYVPSDEDAPREDDFILETMPSYEPESQAEQEEHTKERIPKMYPIGQMHATYIFAQNENGLYIIDQHAAQERIKYEFYREKIGEVSRELQELLVPIVLEFPADEYVRLEEQKAKLEEVGVFLENFGQNSFIIRAHPTWFPKDQEEEMLREIIDEALSAPSISIHKLREDTAIMMSCKKSIKANHYLTTQDMEALLDTLREASDPFTCPHGRPVIIQYSTYELEKMFKRVM.

The tract at residues 361–383 (KETPTLFSKPTIPEYVPSDEDAP) is disordered.

This sequence belongs to the DNA mismatch repair MutL/HexB family.

This protein is involved in the repair of mismatches in DNA. It is required for dam-dependent methyl-directed DNA mismatch repair. May act as a 'molecular matchmaker', a protein that promotes the formation of a stable complex between two or more DNA-binding proteins in an ATP-dependent manner without itself being part of a final effector complex. This Listeria monocytogenes serotype 4b (strain CLIP80459) protein is DNA mismatch repair protein MutL.